Here is a 112-residue protein sequence, read N- to C-terminus: Integration host factor subunit alpha (112 aa).

The protein belongs to the bacterial histone-like protein family. In terms of assembly, heterodimer of an alpha and a beta chain.

Its function is as follows. This protein is one of the two subunits of integration host factor, a specific DNA-binding protein that functions in genetic recombination as well as in transcriptional and translational control. In Rhizobium leguminosarum bv. trifolii (strain WSM2304), this protein is Integration host factor subunit alpha.